A 372-amino-acid polypeptide reads, in one-letter code: Alanine dehydrogenase 1 (372 aa).

The active site involves H94. Position 170-200 (170-200 (TYVIFGGGVAATNAANVALGLNAKVIIIELN)) interacts with NAD(+).

It belongs to the AlaDH/PNT family.

The enzyme catalyses L-alanine + NAD(+) + H2O = pyruvate + NH4(+) + NADH + H(+). The protein operates within amino-acid degradation; L-alanine degradation via dehydrogenase pathway; NH(3) and pyruvate from L-alanine: step 1/1. May play a role in cell wall synthesis as L-alanine is an important constituent of the peptidoglycan layer. In Staphylococcus aureus (strain NCTC 8325 / PS 47), this protein is Alanine dehydrogenase 1 (ald1).